We begin with the raw amino-acid sequence, 77 residues long: DNA-directed RNA polymerase subunit epsilon (77 aa).

The protein belongs to the RNA polymerase subunit epsilon family. As to quaternary structure, RNAP is composed of a core of 2 alpha, a beta and a beta' subunit. The core is associated with a delta subunit, and at least one of epsilon or omega. When a sigma factor is associated with the core the holoenzyme is formed, which can initiate transcription.

The catalysed reaction is RNA(n) + a ribonucleoside 5'-triphosphate = RNA(n+1) + diphosphate. Functionally, a non-essential component of RNA polymerase (RNAP). This Streptococcus pneumoniae serotype 2 (strain D39 / NCTC 7466) protein is DNA-directed RNA polymerase subunit epsilon.